A 127-amino-acid chain; its full sequence is uncharacterized protein (127 aa).

The signal sequence occupies residues M1 to G23. Positions C43–R127 are disordered. Positions P59–L70 are enriched in low complexity.

It localises to the secreted. This is an uncharacterized protein from Homo sapiens (Human).